We begin with the raw amino-acid sequence, 430 residues long: Adenylosuccinate synthetase (430 aa).

Residues 12–18 (GDEGKGK) and 40–42 (GHT) contribute to the GTP site. Asp-13 acts as the Proton acceptor in catalysis. The Mg(2+) site is built by Asp-13 and Gly-40. IMP-binding positions include 13–16 (DEGK), 38–41 (NAGH), Thr-128, Arg-142, Gln-223, Thr-238, and Arg-302. Residue His-41 is the Proton donor of the active site. A substrate-binding site is contributed by 298-304 (TTTGRPR). Residues Arg-304, 330–332 (SID), and 412–414 (SVG) each bind GTP.

Belongs to the adenylosuccinate synthetase family. As to quaternary structure, homodimer. Mg(2+) serves as cofactor.

It localises to the cytoplasm. The enzyme catalyses IMP + L-aspartate + GTP = N(6)-(1,2-dicarboxyethyl)-AMP + GDP + phosphate + 2 H(+). It participates in purine metabolism; AMP biosynthesis via de novo pathway; AMP from IMP: step 1/2. Functionally, plays an important role in the de novo pathway of purine nucleotide biosynthesis. Catalyzes the first committed step in the biosynthesis of AMP from IMP. In Streptococcus pyogenes serotype M4 (strain MGAS10750), this protein is Adenylosuccinate synthetase.